The following is an 839-amino-acid chain: MISPPPTFSFANLLNGSYGVDTPEEVERVRREQREDAEAALRNYKPLPAVDVSESVPRDEPIVSQTVTAAPVTSVDDAFVSFGAEDYLEMSPSELLSAFELMVKPLRVGEVLCSSFDRSLFISSVAMARTLLLAPLTSTRTLKRFEDLVAAIYLKTDFFLEDDGPQTDVSQSDVPGYIFEPGQHSSGFEPPPICAKCDLILYQCPCFDFNALRESCAEKTFSHDYVIEGLDGVIDNATLLSNLGPFLLPVHCSYSKTEDPDFVVDPSLARPTDRVDVHVVQAVCDTTLPTHGNYDDSFHQVFVDSADYSTDMDHVRLRQSDLVAKIPDGGHMLPVLNTGSGHQRVGTTKEVLTAIKKRNADVPELGDSVNLSRLSKAVAERFRLSYMNVDALAKSNFVNVVSNFHAYMQKWPSSGLSYDDLPDLHAENLQFYDHMIKSDVKPVVTDTLNVDRPVPATITFHKKTITSQFSPLFISLFERFQRCLRERVVLPVGKISSLEMTGFSVLNKHCLEIDLSKFDKSQGEFHLMIQEHILNDLGCPAPITKWWCDFHRFSYIKDKRAGVGMPISFQRRTGDAFTYFGNTIVTMAEFAWCYDTDQFDRLLFSGDDSLAFSKLPPVGDPSKFTTLFNMEAKVMEPAVPYICSKFYSLMSLVTRFQSPTIREIQRLGTKKIPYSDNNDFLFAHFMSFVDRLKFMDRMSQSCIDQLSIFFELKYKKSGNEAALVLGAFKKYTANFNAYKELYYSDRQQCDLVNTFCISEFRVIRRTTVKKKKNGCVDSSGVDRRPPLSQFAGGETSKTKVSRQKPASEGLQKSQRESAIYSETFPDVTIPRSRSRGLVS.

Residues 508–621 (KHCLEIDLSK…FSKLPPVGDP (114 aa)) enclose the RdRp catalytic domain. Residues 773–824 (NGCVDSSGVDRRPPLSQFAGGETSKTKVSRQKPASEGLQKSQRESAIYSETF) are disordered.

Belongs to the ssRNA positive-strand viruses RNA-directed RNA polymerase family. Interacts with replication protein 1a.

The catalysed reaction is RNA(n) + a ribonucleoside 5'-triphosphate = RNA(n+1) + diphosphate. RNA-dependent RNA polymerase which replicates the viral genome composed of 3 RNA segments, RNA1, RNA2 and RNA3. The sequence is that of RNA-directed RNA polymerase 2a from Cucumber mosaic virus (strain Q) (CMV).